We begin with the raw amino-acid sequence, 155 residues long: Ribosomal RNA large subunit methyltransferase H (155 aa).

S-adenosyl-L-methionine is bound by residues Leu73, Gly104, and 123-128 (LSPLTL).

This sequence belongs to the RNA methyltransferase RlmH family. As to quaternary structure, homodimer.

The protein localises to the cytoplasm. It catalyses the reaction pseudouridine(1915) in 23S rRNA + S-adenosyl-L-methionine = N(3)-methylpseudouridine(1915) in 23S rRNA + S-adenosyl-L-homocysteine + H(+). Specifically methylates the pseudouridine at position 1915 (m3Psi1915) in 23S rRNA. This is Ribosomal RNA large subunit methyltransferase H from Pseudomonas aeruginosa (strain LESB58).